An 827-amino-acid chain; its full sequence is MAASAVAVAFVVAVAAVLAAAASAAVTYDRKAVVVNGQRRILISGSIHYPRSTPEMWPDLIEKAKDGGLDVVQTYVFWNGHEPSPGQYYFEGRYDLVHFIKLVKQAGLYVNLRIGPYVCAEWNFGGFPVWLKYVPGISFRTDNEPFKAEMQKFTTKIVEMMKSEGLFEWQGGPIILSQIENEFGPLEWDQGEPAKAYASWAANMAVALNTSVPWIMCKEDDAPDPIINTCNGFYCDWFSPNKPHKPTMWTEAWTAWYTGFGIPVPHRPVEDLAYGVAKFIQKGGSFVNYYMYHGGTNFGRTAGGPFIATSYDYDAPIDEYGLLREPKWGHLKQLHKAIKLCEPALVAGDPIVTSLGNAQKSSVFRSSTGACAAFLENKDKVSYARVAFNGMHYDLPPWSISILPDCKTTVFNTARVGSQISQMKMEWAGGFAWQSYNEEINSFGEDPLTTVGLLEQINVTRDNTDYLWYTTYVDVAQDEQFLSNGENLKLTVMSAGHALHIFINGQLKGTVYGSVDDPKLTYTGNVKLWAGSNTISCLSIAVGLPNVGEHFETWNAGILGPVTLDGLNEGRRDLTWQKWTYQVGLKGESMSLHSLSGSSTVEWGEPVQKQPLTWYKAFFNAPDGDEPLALDMSSMGKGQIWINGQGIGRYWPGYKASGNCGTCDYRGEYDETKCQTNCGDSSQRWYHVPRSWLSPTGNLLVIFEEWGGDPTGISMVKRSIGSVCADVSEWQPSMKNWHTKDYEKAKVHLQCDNGQKITEIKFASFGTPQGSCGSYTEGGCHAHKSYDIFWKNCVGQERCGVSVVPEIFGGDPCPGTMKRAVVEAICG.

Residues 1-24 (MAASAVAVAFVVAVAAVLAAAASA) form the signal peptide. Glutamate 182 serves as the catalytic Proton donor. Residue asparagine 209 is glycosylated (N-linked (GlcNAc...) asparagine). Glutamate 251 serves as the catalytic Nucleophile. A glycan (N-linked (GlcNAc...) asparagine) is linked at asparagine 458. Residues 741–827 (DYEKAKVHLQ…KRAVVEAICG (87 aa)) form the SUEL-type lectin domain.

This sequence belongs to the glycosyl hydrolase 35 family.

The protein resides in the secreted. It is found in the extracellular space. It localises to the apoplast. The catalysed reaction is Hydrolysis of terminal non-reducing beta-D-galactose residues in beta-D-galactosides.. The chain is Beta-galactosidase 2 from Oryza sativa subsp. japonica (Rice).